A 1146-amino-acid polypeptide reads, in one-letter code: Integrin alpha-PS1 (1146 aa).

An N-terminal signal peptide occupies residues 1–30 (MLELPFTTIRPNCRLRQNLGILIILQCVLT). Residues 31 to 1085 (CYNFNLEQRL…NQQRDTSIPW (1055 aa)) are Extracellular-facing. 7 FG-GAP repeats span residues 38-105 (QRLP…FDDC), 121-186 (LSPP…FEEV), 193-245 (RPVQ…YLQR), 254-303 (HSDL…KSTD), 304-366 (NPIP…TLPM), 367-422 (KYTL…GLNS), and 432-494 (ELGG…RKEL). Asn-68, Asn-86, and Asn-147 each carry an N-linked (GlcNAc...) asparagine glycan. Residues Asn-470, Asn-511, Asn-657, Asn-680, Asn-711, Asn-718, Asn-761, and Asn-928 are each glycosylated (N-linked (GlcNAc...) asparagine). The tract at residues 938–958 (YYSSSHRDDHSDDTQSNRNRV) is disordered. Residues 942-952 (SHRDDHSDDTQ) show a composition bias toward basic and acidic residues. N-linked (GlcNAc...) asparagine glycosylation occurs at Asn-1027. Residues 1086-1106 (LIIILGIVGGLLLLALVTYVL) traverse the membrane as a helical segment. Residues 1107–1146 (WKVGFFKRIRPTDPTLSGNLEKMNEEKPFLAPSKNTHHVF) are Cytoplasmic-facing.

Belongs to the integrin alpha chain family. Heterodimer of an alpha and a beta subunit. The alpha subunit is composed of a heavy and a light chain linked by a disulfide bond. Alpha-PS1 associates with beta-PS. Expressed in follicle cells (at protein level). At syncytial blastoderm stage, expressed in the ectoderm but not in the mesodermal precursors. At embryonic stage 7, expressed in dorsal and ventrolateral ectoderm and in some yolk nuclei. At late stage 10, expression is homogeneous in the ectoderm and is particularly abundant in the anterior and posterior midgut primordia. At stage 11, strongly expressed in a metameric pattern in the ectoderm, in the proctodeum and in the posterior midgut primordium. At stage 12, accumulates at the segment boundaries that start to become morphologically visible, similar expression pattern is observed in the central nervous system. In third larval instar wing imaginal disk, strongly expressed in the dorsal compartment, in the adepithelial cells and in patches on the peripodial membrane covering the imaginal disk to the outside.

The protein localises to the apical cell membrane. The protein resides in the lateral cell membrane. It is found in the basal cell membrane. Its function is as follows. Integrin alpha-PS1/beta-PS is a receptor for laminin. In Drosophila melanogaster (Fruit fly), this protein is Integrin alpha-PS1 (mew).